A 64-amino-acid polypeptide reads, in one-letter code: Large ribosomal subunit protein bL35 (64 aa).

A disordered region spans residues 1–23 (MPKMKTKSGAAKRFKKTANGFKH).

It belongs to the bacterial ribosomal protein bL35 family.

The chain is Large ribosomal subunit protein bL35 from Stutzerimonas stutzeri (strain A1501) (Pseudomonas stutzeri).